A 361-amino-acid polypeptide reads, in one-letter code: MSAVFDPSQYDAQLAAKAARLRELLAPFGAPEPSVFDSPREHYRLRAEFRLWREGGQRHYAMFAPGEKHKAILIDDFPIASQRINELMPRLKAAWQGNEDLNNRLFQVEFLTTLAGDAMVTLCYHRPLDEAWEAAAQQLASELNVSVIGRSKGKRVVIGRDYAVENLDIAGRTFSYRQPEGAFTQPNGAVNQKMLGWAFEAMGERDDDLLELYCGNGNFTLPLATRARQVLATEISKTSVNAALHNLDENGVDNVRLVRLSAEELTQALNEVRPFRRLEGIDLKSYDFGTVFVDPPRAGMDPDTCELTRRFERILYISCNPETLAQNIAQLQDTHRIERCALFDQFPYTHHMESGVLLVRR.

Gln-185, Tyr-213, Asn-218, Glu-234, and Asp-294 together coordinate S-adenosyl-L-methionine. Catalysis depends on Cys-319, which acts as the Nucleophile. Glu-353 acts as the Proton acceptor in catalysis.

The protein belongs to the class I-like SAM-binding methyltransferase superfamily. RNA M5U methyltransferase family. TrmA subfamily.

It catalyses the reaction uridine(54) in tRNA + S-adenosyl-L-methionine = 5-methyluridine(54) in tRNA + S-adenosyl-L-homocysteine + H(+). The enzyme catalyses uridine(341) in tmRNA + S-adenosyl-L-methionine = 5-methyluridine(341) in tmRNA + S-adenosyl-L-homocysteine + H(+). Functionally, dual-specificity methyltransferase that catalyzes the formation of 5-methyluridine at position 54 (m5U54) in all tRNAs, and that of position 341 (m5U341) in tmRNA (transfer-mRNA). This Pseudomonas entomophila (strain L48) protein is tRNA/tmRNA (uracil-C(5))-methyltransferase.